Consider the following 193-residue polypeptide: Annexin-2 receptor (193 aa).

The segment covering 78-87 has biased composition (polar residues); that stretch reads QSTLEPSTAK. A disordered region spans residues 78–111; that stretch reads QSTLEPSTAKPTEFSWPGTQKQQEAPVEEVGQAE.

In terms of tissue distribution, widely expressed. Highly expressed in lymphocytes. Expressed in both resting CD4(+) and CD8(+) T-cells.

Functionally, may act as a receptor for annexin II on marrow stromal cells to induce osteoclast formation. The protein is Annexin-2 receptor (ANXA2R) of Homo sapiens (Human).